We begin with the raw amino-acid sequence, 83 residues long: Cytochrome c5 (83 aa).

Heme c contacts are provided by C15, C18, H19, and M59. A disulfide bridge connects residues C65 and C68.

This sequence belongs to the cytochrome c family. Homodimer. Binds 1 heme c group covalently per subunit.

In terms of biological role, it is unreactive with cytochrome c reductase or oxidase. This is Cytochrome c5 from Azotobacter vinelandii.